We begin with the raw amino-acid sequence, 110 residues long: MVRTKANYVPGAYRKVVASQAPRKVLGSSTFVTNSSGSSRKAENKYAGGNPVCVRPTPKWQKGIGEFFRLSPKDSKKENQIPEEAGSSGLGKAKRKACPLQPDHRDDENE.

A Glycyl lysine isopeptide (Lys-Gly) (interchain with G-Cter in ubiquitin) cross-link involves residue Lys-15. The D-box motif lies at 23–34 (RKVLGSSTFVTN). N6-acetyllysine; alternate is present on Lys-24. Lys-24 participates in a covalent cross-link: Glycyl lysine isopeptide (Lys-Gly) (interchain with G-Cter in ubiquitin); alternate. Phosphoserine is present on Ser-28. Low complexity predominate over residues 29–39 (STFVTNSSGSS). Residues 29 to 110 (STFVTNSSGS…QPDHRDDENE (82 aa)) are disordered. The short motif at 61-71 (QKGIGEFFRLS) is the PIP-box element. Ser-71 bears the Phosphoserine mark. The segment covering 71–80 (SPKDSKKENQ) has biased composition (basic and acidic residues). The short motif at 77–79 (KEN) is the KEN box element. The Initiation motif motif lies at 84–96 (EAGSSGLGKAKRK).

Interacts (when monoubiquitinated at Lys-15 and Lys-24) with PCNA. Interacts with isoform 2/p33ING1b of ING1. Interacts with BRCA1. Monoubiquitinated at Lys-15 and Lys-24 during normal S phase, promoting its association with PCNA. Also diubiquitinated at these 2 sites. Following DNA damage, monoubiquitin chains at Lys-15 and Lys-24 are probably extended, leading to disrupt the interaction with PCNA. Polyubiquitinated by the APC/C complex at the mitotic exit, leading to its degradation by the proteasome.

Its subcellular location is the nucleus. It localises to the cytoplasm. It is found in the perinuclear region. In terms of biological role, PCNA-binding protein that acts as a regulator of DNA repair during DNA replication. Following DNA damage, the interaction with PCNA is disrupted, facilitating the interaction between monoubiquitinated PCNA and the translesion DNA synthesis DNA polymerase eta (POLH) at stalled replisomes, facilitating the bypass of replication-fork-blocking lesions. Also acts as a regulator of centrosome number. The polypeptide is PCNA-associated factor (Rattus norvegicus (Rat)).